The chain runs to 152 residues: Large ribosomal subunit protein uL13 (152 aa).

This sequence belongs to the universal ribosomal protein uL13 family. In terms of assembly, part of the 50S ribosomal subunit.

In terms of biological role, this protein is one of the early assembly proteins of the 50S ribosomal subunit, although it is not seen to bind rRNA by itself. It is important during the early stages of 50S assembly. The protein is Large ribosomal subunit protein uL13 of Neorickettsia sennetsu (strain ATCC VR-367 / Miyayama) (Ehrlichia sennetsu).